We begin with the raw amino-acid sequence, 650 residues long: Acetyl-coenzyme A synthetase (650 aa).

Residues 191-194 (RAGR), Thr311, and Asn335 contribute to the CoA site. ATP contacts are provided by residues 387-389 (GEP), 411-416 (DTWWQT), Asp500, and Arg515. Position 523 (Ser523) interacts with CoA. Residue Arg526 participates in ATP binding. Positions 537, 539, and 542 each coordinate Mg(2+). Arg584 is a CoA binding site. The residue at position 609 (Lys609) is an N6-acetyllysine.

The protein belongs to the ATP-dependent AMP-binding enzyme family. Mg(2+) serves as cofactor. Post-translationally, acetylated. Deacetylation by the SIR2-homolog deacetylase activates the enzyme.

It carries out the reaction acetate + ATP + CoA = acetyl-CoA + AMP + diphosphate. Functionally, catalyzes the conversion of acetate into acetyl-CoA (AcCoA), an essential intermediate at the junction of anabolic and catabolic pathways. AcsA undergoes a two-step reaction. In the first half reaction, AcsA combines acetate with ATP to form acetyl-adenylate (AcAMP) intermediate. In the second half reaction, it can then transfer the acetyl group from AcAMP to the sulfhydryl group of CoA, forming the product AcCoA. The chain is Acetyl-coenzyme A synthetase from Shewanella pealeana (strain ATCC 700345 / ANG-SQ1).